The primary structure comprises 68 residues: C-hordein (68 aa).

2 stretches are compositionally biased toward pro residues: residues 1 to 24 and 33 to 55; these read YPQQ…PQQP and PQQP…PLQP. Positions 1-68 are disordered; the sequence is YPQQPQPFPQ…YTQQTIWSMV (68 aa). Polar residues predominate over residues 59-68; that stretch reads YTQQTIWSMV.

Developing endosperm.

Functionally, sulfur-poor seed storage protein. In Hordeum vulgare (Barley), this protein is C-hordein.